We begin with the raw amino-acid sequence, 440 residues long: Heat stress transcription factor A-4b (440 aa).

The stretch at 121 to 181 (NERKDYEEEI…QRSLISYVRE (61 aa)) forms a coiled coil. Positions 133 to 183 (LKSDNAALSSELQNNTLKKLNMEKRMQALEEKLFVVEDQQRSLISYVREIV) are hydrophobic repeat HR-A/B. The short motif at 158–163 (MQALEE) is the Nuclear export signal element. Residues 200–204 (RKKRR) carry the Nuclear localization signal motif. Residues 264–417 (DISYDDGVPG…EMKSGDRQHL (154 aa)) form a disordered region. The segment covering 295–305 (SPPTRMRTSSA) has biased composition (polar residues). Residues 333–343 (SRVDTRAKVSE) are compositionally biased toward basic and acidic residues. The AHA signature appears at 375–384 (DGFWQQFLTE). Residues 380-390 (QFLTEQPGSSD) show a composition bias toward polar residues. Residues 391 to 417 (AHQEAQSERRDGGNKVDEMKSGDRQHL) show a composition bias toward basic and acidic residues.

This sequence belongs to the HSF family. Class A subfamily. In terms of assembly, homotrimer. Exhibits temperature-dependent phosphorylation.

The protein resides in the cytoplasm. The protein localises to the nucleus. Functionally, transcriptional regulator that specifically binds DNA of heat shock promoter elements (HSE). The protein is Heat stress transcription factor A-4b (HSFA4B) of Oryza sativa subsp. japonica (Rice).